The chain runs to 108 residues: Evasin P1127 (108 aa).

The signal sequence occupies residues 1 to 28; the sequence is MEAKTFAFLEIAMFIALGIQTFVAVTDA. 3 cysteine pairs are disulfide-bonded: Cys41–Cys63, Cys45–Cys65, and Cys56–Cys76. Asn44 carries an N-linked (GlcNAc...) asparagine glycan. A glycan (N-linked (GlcNAc...) asparagine) is linked at Asn89.

The protein resides in the secreted. Functionally, salivary chemokine-binding protein which binds to host chemokines CXCL1, CXCL2, CXCL3, CXCL5 and CXCL8. This chain is Evasin P1127, found in Ixodes ricinus (Common tick).